Here is a 169-residue protein sequence, read N- to C-terminus: Peptide deformylase 1 (169 aa).

Fe cation-binding residues include cysteine 93 and histidine 135. Glutamate 136 is an active-site residue. Histidine 139 lines the Fe cation pocket.

The protein belongs to the polypeptide deformylase family. Fe(2+) is required as a cofactor.

It carries out the reaction N-terminal N-formyl-L-methionyl-[peptide] + H2O = N-terminal L-methionyl-[peptide] + formate. Removes the formyl group from the N-terminal Met of newly synthesized proteins. Requires at least a dipeptide for an efficient rate of reaction. N-terminal L-methionine is a prerequisite for activity but the enzyme has broad specificity at other positions. This chain is Peptide deformylase 1, found in Corynebacterium glutamicum (strain ATCC 13032 / DSM 20300 / JCM 1318 / BCRC 11384 / CCUG 27702 / LMG 3730 / NBRC 12168 / NCIMB 10025 / NRRL B-2784 / 534).